The primary structure comprises 137 residues: MRTLWIVAVCLIGVEGNLYQFGNMIFKMTKKSALLSYSNYGCYCGWGGKGKPQDATDRCCFVHDCCYGRVNGCDPKLSIYSYSFENGDIVCGGDDPCLRAVCECDRVAAICFGENLNTYDKKYKNYPSSHCTETEQC.

Positions 1-16 are cleaved as a signal peptide; it reads MRTLWIVAVCLIGVEG. 7 cysteine pairs are disulfide-bonded: Cys42/Cys131, Cys44/Cys60, Cys59/Cys111, Cys65/Cys137, Cys66/Cys104, Cys73/Cys97, and Cys91/Cys102. 3 residues coordinate Ca(2+): Tyr43, Gly45, and Gly47. Residue His63 is part of the active site. Asp64 is a binding site for Ca(2+). Asp105 is an active-site residue.

This sequence belongs to the phospholipase A2 family. Group II subfamily. D49 sub-subfamily. Requires Ca(2+) as cofactor. As to expression, expressed by the venom gland.

The protein resides in the secreted. The enzyme catalyses a 1,2-diacyl-sn-glycero-3-phosphocholine + H2O = a 1-acyl-sn-glycero-3-phosphocholine + a fatty acid + H(+). Snake venom phospholipase A2 (PLA2) that has enzymatic activity but is non-toxic. Displays low binding affinity and enzymatic activity on phosphatidylserine-containing vesicles and HEK-293 plasma membranes, in contrast to ammodytoxins that have high activity on these phospholipids. PLA2 catalyzes the calcium-dependent hydrolysis of the 2-acyl groups in 3-sn-phosphoglycerides. The chain is Neutral phospholipase A2 ammodytin I2 from Vipera ammodytes ammodytes (Western sand viper).